The chain runs to 1188 residues: DNA-directed RNA polymerase subunit beta (1188 aa).

The protein belongs to the RNA polymerase beta chain family. In terms of assembly, the RNAP catalytic core consists of 2 alpha, 1 beta, 1 beta' and 1 omega subunit. When a sigma factor is associated with the core the holoenzyme is formed, which can initiate transcription.

It carries out the reaction RNA(n) + a ribonucleoside 5'-triphosphate = RNA(n+1) + diphosphate. DNA-dependent RNA polymerase catalyzes the transcription of DNA into RNA using the four ribonucleoside triphosphates as substrates. The sequence is that of DNA-directed RNA polymerase subunit beta from Streptococcus gordonii (strain Challis / ATCC 35105 / BCRC 15272 / CH1 / DL1 / V288).